Consider the following 80-residue polypeptide: Exodeoxyribonuclease 7 small subunit (80 aa).

It belongs to the XseB family. As to quaternary structure, heterooligomer composed of large and small subunits.

The protein resides in the cytoplasm. The catalysed reaction is Exonucleolytic cleavage in either 5'- to 3'- or 3'- to 5'-direction to yield nucleoside 5'-phosphates.. Functionally, bidirectionally degrades single-stranded DNA into large acid-insoluble oligonucleotides, which are then degraded further into small acid-soluble oligonucleotides. The polypeptide is Exodeoxyribonuclease 7 small subunit (Rickettsia typhi (strain ATCC VR-144 / Wilmington)).